Reading from the N-terminus, the 329-residue chain is Ribosomal RNA small subunit methyltransferase H (329 aa).

Residues 44–46, Asp62, Asp110, and Gln117 contribute to the S-adenosyl-L-methionine site; that span reads GGY. Positions 297-329 are disordered; the sequence is APAELAANPRARSARLRSAERTSAPARRLGDAA.

The protein belongs to the methyltransferase superfamily. RsmH family.

Its subcellular location is the cytoplasm. It catalyses the reaction cytidine(1402) in 16S rRNA + S-adenosyl-L-methionine = N(4)-methylcytidine(1402) in 16S rRNA + S-adenosyl-L-homocysteine + H(+). Specifically methylates the N4 position of cytidine in position 1402 (C1402) of 16S rRNA. This Rhodospirillum centenum (strain ATCC 51521 / SW) protein is Ribosomal RNA small subunit methyltransferase H.